Consider the following 445-residue polypeptide: Phosphoglucosamine mutase (445 aa).

Residue S102 is the Phosphoserine intermediate of the active site. Mg(2+)-binding residues include S102, D241, D243, and D245. Phosphoserine is present on S102.

The protein belongs to the phosphohexose mutase family. Mg(2+) is required as a cofactor. Activated by phosphorylation.

It catalyses the reaction alpha-D-glucosamine 1-phosphate = D-glucosamine 6-phosphate. In terms of biological role, catalyzes the conversion of glucosamine-6-phosphate to glucosamine-1-phosphate. The polypeptide is Phosphoglucosamine mutase (Enterobacter sp. (strain 638)).